The primary structure comprises 211 residues: CASP-like protein 1B1 (211 aa).

Residues 1 to 29 (MDLERGSKTPPSSAPAAAAATTTTSTCCS) form a disordered region. Over 1 to 55 (MDLERGSKTPPSSAPAAAAATTTTSTCCSNKRPQLRDRLVALQPVVLRAAATLAT) the chain is Cytoplasmic. Low complexity predominate over residues 9 to 26 (TPPSSAPAAAAATTTTST). Residues 56-76 (AVAAAVMALNAQSYTAVVAIV) traverse the membrane as a helical segment. The Extracellular portion of the chain corresponds to 77-94 (GTRPLTQTFTTKFRDTPA). Residues 95 to 115 (FVYFVIANAIAAVYNLVMLLF) form a helical membrane-spanning segment. The Cytoplasmic segment spans residues 116 to 123 (RCLILRRR). The helical transmembrane segment at 124-144 (MAGLVVHMLDMVIMALLATGA) threads the bilayer. Residues 145–176 (ATAAAMAELGKNGNVHARWNPICDRFGSFCSR) are Extracellular-facing. Residues 177-197 (GGVALASSFTGVALMLALNLL) traverse the membrane as a helical segment. The Cytoplasmic segment spans residues 198–211 (SAASNAQCSPGQYE).

This sequence belongs to the Casparian strip membrane proteins (CASP) family. Homodimer and heterodimers.

The protein resides in the cell membrane. This Sorghum bicolor (Sorghum) protein is CASP-like protein 1B1.